Reading from the N-terminus, the 365-residue chain is PHD finger protein 6 (365 aa).

Residue Ser2 is modified to N-acetylserine. Short sequence motifs (nuclear localization signal) lie at residues 13–16 (RQRK) and 129–133 (RKHKK). A C2HC pre-PHD-type 1 zinc finger spans residues 14–52 (QRKCGFCKSNRDKECGQLLISENQKVAAHHKCMLFSSAL). The extended PHD1 domain (ePHD1) stretch occupies residues 14-132 (QRKCGFCKSN…IYMVYCRKHK (119 aa)). The PHD-type 1 zinc-finger motif lies at 80–132 (LMCSLCHCPGATIGCDVKTCHRTYHYHCALHDKAQIREKPSQGIYMVYCRKHK). Residues Ser138, Ser145, and Ser155 each carry the phosphoserine modification. The interval 139 to 211 (EADLEESFNE…RSSPSDTRPK (73 aa)) is disordered. Positions 157-169 (KSKKKSRKGRPRK) match the Nucleolar localization signal motif. The segment covering 157–171 (KSKKKSRKGRPRKTN) has biased composition (basic residues). Residue Lys173 forms a Glycyl lysine isopeptide (Lys-Gly) (interchain with G-Cter in SUMO2) linkage. Ser183 and Ser199 each carry phosphoserine. Residues 209 to 249 (RPKCGFCHVGEEENEARGKLHIFNAKKAAAHYKCMLFSSGT) form a C2HC pre-PHD-type 2 zinc finger. The interval 209 to 330 (RPKCGFCHVG…IYKLYCKNHS (122 aa)) is extended PHD2 domain (ePHD2). A Glycyl lysine isopeptide (Lys-Gly) (interchain with G-Cter in SUMO2) cross-link involves residue Lys227. The segment at 278 to 330 (MKCTLCSQPGATIGCEIKACVKTYHYHCGVQDKAKYIENMSRGIYKLYCKNHS) adopts a PHD-type 2 zinc-finger fold. The tract at residues 330–365 (SGNDERDEEDEERESKSRGKVEIDQQQLTQQQLNGN) is disordered. The segment covering 342 to 352 (RESKSRGKVEI) has biased composition (basic and acidic residues). A compositionally biased stretch (low complexity) spans 354–365 (QQQLTQQQLNGN). Thr358 carries the post-translational modification Phosphothreonine.

As to quaternary structure, interacts with UBTF. Interacts with the NuRD complex component RBBP4 (via the nucleolar localization motif), the interaction mediates transcriptional repression activity.

It is found in the nucleus. The protein localises to the nucleolus. Its subcellular location is the chromosome. The protein resides in the centromere. It localises to the kinetochore. Functionally, transcriptional regulator that associates with ribosomal RNA promoters and suppresses ribosomal RNA (rRNA) transcription. The chain is PHD finger protein 6 (PHF6) from Pongo abelii (Sumatran orangutan).